The sequence spans 266 residues: Putative transmembrane ascorbate-dependent reductase CYB561 homolog (266 aa).

The Cytoplasmic portion of the chain corresponds to 1 to 22; that stretch reads MSLLFDPGFVILREDQSVKLFN. Residues 23–43 form a helical membrane-spanning segment; sequence IILVMSQVFGGLAVLLVTIWM. In terms of domain architecture, Cytochrome b561 spans 27-240; it reads MSQVFGGLAV…YTVCVLLLVL (214 aa). Residues 44–61 lie on the Vesicular side of the membrane; that stretch reads SKFESGFAWNEDPDKEFN. A helical membrane pass occupies residues 62–82; it reads YHPTFMIMGMVFLFGEALLVY. His63, Arg83, and Lys90 together coordinate heme b. Over 83–95 the chain is Cytoplasmic; that stretch reads RVFRNERKKFSKT. L-ascorbate-binding residues include Lys90 and Lys94. Residues 96–116 form a helical membrane-spanning segment; it reads LHVILHSCVLVFMLMALKAVF. Heme b-binding positions include His97, 134 to 137, and His139; that span reads NLVS. Residues 117 to 141 are Vesicular-facing; it reads DYHNLHKDPSGNPAPIVNLVSLHSW. Residues 142-162 traverse the membrane as a helical segment; sequence IGLSVVILYFAQYIVGFITYF. Over 163–176 the chain is Cytoplasmic; it reads FPGMPIPIRQLVMP. An L-ascorbate-binding site is contributed by Arg171. The helical transmembrane segment at 177 to 197 threads the bilayer; the sequence is FHQMFGVLIFIFVSITVAMGI. 2 residues coordinate heme b: His178 and Glu199. Residues 198-219 are Vesicular-facing; it reads SERAAWKHTCWTKEGQMCAQQA. A helical membrane pass occupies residues 220 to 240; the sequence is TSSFVGVFTFLYTVCVLLLVL. Topologically, residues 241 to 266 are cytoplasmic; the sequence is NPRWKRQSLPEEEGLHHLTSSHSMSD. Residue Lys245 coordinates heme b.

Requires heme b as cofactor.

Its subcellular location is the membrane. The catalysed reaction is monodehydro-L-ascorbate radical(out) + L-ascorbate(in) = monodehydro-L-ascorbate radical(in) + L-ascorbate(out). Putative transmembrane reductase that uses ascorbate as an electron donor in the cytoplasm and transfers electrons across membranes to reduce monodehydro-L-ascorbate radical in the lumen of secretory vesicles. This chain is Putative transmembrane ascorbate-dependent reductase CYB561 homolog, found in Caenorhabditis elegans.